Here is a 168-residue protein sequence, read N- to C-terminus: MRGFIIGRFQPFHKGHLEVIKKIAEEVDEIIIGIGSAQKSHTLENPFTAGERILMITQSLKDYDLTYYPIPIKDIEFNSIWVSYVESLTPPFDIVYSGNPLVRVLFEERGYEVKRPEMFNRKEYSGTEIRRRMLNGEKWEHLVPKAVVDVIKEIKGVERLRKLAQTDK.

Residues R8, F9, H13, H16, F119, R121, Y124, G126, T127, and R130 each coordinate ATP.

The protein belongs to the archaeal NMN adenylyltransferase family. Homohexamer existing as a trimer of dimers.

It is found in the cytoplasm. The catalysed reaction is beta-nicotinamide D-ribonucleotide + ATP + H(+) = diphosphate + NAD(+). It participates in cofactor biosynthesis; NAD(+) biosynthesis; NAD(+) from nicotinamide D-ribonucleotide: step 1/1. Catalyzes the formation of NAD(+) from nicotinamide mononucleotide (NMN) and ATP. This Methanocaldococcus jannaschii (strain ATCC 43067 / DSM 2661 / JAL-1 / JCM 10045 / NBRC 100440) (Methanococcus jannaschii) protein is Nicotinamide-nucleotide adenylyltransferase.